Consider the following 567-residue polypeptide: Vacuolar fusion protein MON1 homolog (567 aa).

Disordered stretches follow at residues 1-52 (MDMD…DDEG) and 65-129 (TSAS…DDTS). Residues 7-19 (TNNPSPPGPPDSP) are compositionally biased toward pro residues. Over residues 43–52 (DDYDDDDDEG) the composition is skewed to acidic residues.

It belongs to the MON1/SAND family. As to quaternary structure, interacts with CCZ1A, CCZ1B and RABF2B.

It localises to the endosome. The protein localises to the prevacuolar compartment. Functionally, plays an important role in membrane trafficking through the secretory apparatus. In complex with CCZ1, acts as a guanine exchange factor (GEF) for Rab7 protein family. Promotes the exchange of GDP to GTP, converting it from an inactive GDP-bound form into an active GTP-bound form. The active form is involved in protein trafficking from prevacuolar compartments (PVCs) to vacuoles. May serve as a linker between Rab5 and Rab7 protein families in PVCs and mediate PVC maturation. The sequence is that of Vacuolar fusion protein MON1 homolog from Oryza sativa subsp. japonica (Rice).